Reading from the N-terminus, the 62-residue chain is Conotoxin Lt5.8 (62 aa).

Positions 1 to 19 are cleaved as a signal peptide; it reads MLCLPVFIILLLLVSPAAT. Positions 20–47 are excised as a propeptide; sequence MPVDLEILKAPTKESRKDFEMRIELLRS. A Pyrrolidone carboxylic acid modification is found at Gln50. Glutamine amide is present on Gln61.

The protein belongs to the conotoxin T superfamily. In terms of processing, contains 2 disulfide bonds that can be either 'C1-C3, C2-C4' or 'C1-C4, C2-C3', since these disulfide connectivities have been observed for conotoxins with cysteine framework V (for examples, see AC P0DQQ7 and AC P81755). In terms of tissue distribution, expressed by the venom duct.

It is found in the secreted. In Conus litteratus (Lettered cone), this protein is Conotoxin Lt5.8.